Reading from the N-terminus, the 232-residue chain is MTTSKIATAFKTATFALAAGAVALGLASPADAAAGTMYGDPAAAAKYWRQQTYDDCVLMSAADVIGQVTGREPSERAIIKVAQSTPSVVHPGSIYTKPADAEHPNSGMGTSVADIPTLLAHYGVDAVITDEDHATATGVATGMAALEQYLGSGHAVIVSINAEMIWGQPVEETDSAGNPRSDHAVVVTGVDTENGIVHLNDSGTPTGRDEQIPMETFVEAWATSHDFMAVTT.

The signal sequence occupies residues 1-32 (MTTSKIATAFKTATFALAAGAVALGLASPADA).

This is an uncharacterized protein from Mycobacterium bovis (strain ATCC BAA-935 / AF2122/97).